The primary structure comprises 351 residues: Probable E3 ubiquitin-protein ligase sinah (351 aa).

The tract at residues Met1–Ala38 is disordered. Polar residues predominate over residues Pro18 to Ala27. The RING-type zinc finger occupies Cys106–Arg141. Positions Val155–Val346 are SBD. Residues Lys158–Glu218 form an SIAH-type zinc finger. Residues Cys163, Cys170, His182, Cys186, Cys193, Cys200, His212, and His217 each coordinate Zn(2+).

It belongs to the SINA (Seven in absentia) family. As to quaternary structure, interacts with ebi and phyl.

The enzyme catalyses S-ubiquitinyl-[E2 ubiquitin-conjugating enzyme]-L-cysteine + [acceptor protein]-L-lysine = [E2 ubiquitin-conjugating enzyme]-L-cysteine + N(6)-ubiquitinyl-[acceptor protein]-L-lysine.. The protein operates within protein modification; protein ubiquitination. Its function is as follows. E3 ubiquitin-protein ligase that mediates ubiquitination and subsequent proteasomal degradation of target proteins. The adapter phyl is required to direct the degradation of the two isoforms of the transcriptional repressor Tramtrack (Ttk). E3 ubiquitin ligases accept ubiquitin from an E2 ubiquitin-conjugating enzyme in the form of a thioester and then directly transfers the ubiquitin to targeted substrates. It probably triggers the ubiquitin-mediated degradation of different substrates. A phyl-independent mechanism of degradation exists for isoform beta of ttk that involves motifs in the C-terminus of ttk. This Drosophila melanogaster (Fruit fly) protein is Probable E3 ubiquitin-protein ligase sinah (sinah).